The following is a 41-amino-acid chain: Plantazolicin (41 aa).

Positions 1–27 (MTKITIPTALSAKVHGEGQHLFEPMAA) are excised as a propeptide. At Arg28 the chain carries N2,N2-dimethylarginine; in form plantazolicin A. The thiazole-4-carboxylic acid (Arg-Cys) cross-link spans 28–29 (RC). 2 cross-links (5-methyloxazole-4-carboxylic acid (Cys-Thr)) span residues 29 to 30 (CT) and 31 to 32 (CT). Residues 30–31 (TC) constitute a cross-link (thiazole-4-carboxylic acid (Thr-Cys)). A cross-link (5-methyloxazole-4-carboxylic acid (Thr-Thr)) is located at residues 32–33 (TT). A cross-link (oxazole-4-carboxylic acid (Ile-Ser)) is located at residues 35–36 (IS). 3 consecutive cross-links (oxazole-4-carboxylic acid (Ser-Ser)) follow at residues 36–37 (SS), 37–38 (SS), and 38–39 (SS). A cross-link (5-methyloxazoline-4-carboxylic acid (Ser-Thr)) is located at residues 39–40 (ST).

In terms of processing, maturation of thiazole and oxazole containing antibiotics involves the enzymatic condensation of a Cys, Ser or Thr with the alpha-carbonyl of the preceding amino acid to form a thioether or ether bond, then dehydration to form a double bond with the alpha-amino nitrogen. Thiazoline or oxazoline ring are dehydrogenated to form thiazole or oxazole rings.

It localises to the secreted. It is found in the cell wall. In terms of biological role, peptide antibiotic inhibiting growth of Gram-positive bacteria. The mode of action appears to be disruption of cell walls and lysis of cells. In Bacillus pumilus (strain ATCC 7061 / DSM 27 / CCUG 26015 / JCM 2508 / NBRC 12092 / NCIMB 9369 / NCTC 10337 / NRRL NRS-272 / CCM 2144), this protein is Plantazolicin.